The primary structure comprises 466 residues: Gamma-aminobutyric acid permease (466 aa).

At 2 to 20 the chain is on the cytoplasmic side; it reads GQSSQPHELGGGLKSRHVT. The next 2 membrane-spanning stretches (helical) occupy residues 21-41 and 42-62; these read MLSI…VAIA and EAGP…VMIM. The Cytoplasmic segment spans residues 63 to 96; that stretch reads RMLAEMAVATPDTGSFSTYADKAIGRWAGYTIGW. The chain crosses the membrane as a helical span at residues 97–117; sequence LYWWFWVLVIPLEANIAAMIL. A topological domain (periplasmic) is located at residue H118. The chain crosses the membrane as a helical span at residues 119 to 139; the sequence is SWVPGIPIWLFSLVITLALTG. Topologically, residues 140–153 are cytoplasmic; the sequence is SNLLSVKNYGEFEF. Residues 154–174 traverse the membrane as a helical segment; that stretch reads WLALCKVIAILAFIFLGAVAI. At 175–199 the chain is on the periplasmic side; that stretch reads SGFYPYAEVSGISRLWDSGGFMPNG. The helical transmembrane segment at 200 to 220 threads the bilayer; sequence FGAVLSAMLITMFSFMGAEIV. Residues 221–246 are Cytoplasmic-facing; sequence TIAAAESDTPEKHIVRATNSVIWRIS. Residues 247–267 form a helical membrane-spanning segment; it reads IFYLCSIFVVVALIPWNMPGL. The Periplasmic segment spans residues 268–286; that stretch reads KAVGSYRSVLELLNIPHAK. A helical transmembrane segment spans residues 287-307; sequence LIMDCVILLSVTSCLNSALYT. The Cytoplasmic segment spans residues 308-334; it reads ASRMLYSLSRRGDAPAVMGKINRSKTP. The helical transmembrane segment at 335–355 threads the bilayer; the sequence is YVAVLLSTGAAFLTVVVNYYA. The Periplasmic portion of the chain corresponds to 356 to 358; that stretch reads PAK. A helical membrane pass occupies residues 359–379; sequence VFKFLIDSSGAIALLVYLVIA. Over 380-402 the chain is Cytoplasmic; it reads VSQLRMRKILRAEGSEIRLRMWL. The chain crosses the membrane as a helical span at residues 403–423; the sequence is YPWLTWLVIGFITFVLVVMLF. The Periplasmic portion of the chain corresponds to 424 to 428; sequence RPAQQ. The chain crosses the membrane as a helical span at residues 429-449; it reads LEVISTGLLAIGIICTVPIMA. Residues 450–466 are Cytoplasmic-facing; it reads RWKKLVLWQKTPVHNTR.

This sequence belongs to the amino acid-polyamine-organocation (APC) superfamily. Amino acid transporter (AAT) (TC 2.A.3.1) family. In terms of assembly, monomer.

Its subcellular location is the cell inner membrane. It catalyses the reaction 4-aminobutanoate(in) + H(+)(in) = 4-aminobutanoate(out) + H(+)(out). Its pathway is amino-acid degradation; 4-aminobutanoate degradation. Uptake is stimulated by ammonium sulfate and abolished by 2,4-dinitrophenol. Is affected both topologically and kinetically by phospholipid composition of the membrane. In cells lacking phosphatidylethanolamine (PE), the N-terminal hairpin is inverted relative to the membrane and the rate of GABA transport is reduced by more than 99%. Transporter for gamma-aminobutyrate (GABA). Transport is driven by the membrane potential. Can also transport a number of GABA analogs such as nipecotic acid or muscimol. The sequence is that of Gamma-aminobutyric acid permease from Escherichia coli (strain K12).